The chain runs to 166 residues: MSDDEGQFAEGGAQVGSLTYPMQAGALKKGGYICINGRPCKVIDLSVSKTGKHGHAKVSIVALDIFTGNKMEDQAPSTHNVEVPFVKTATYSVLDIQEDREDPSKPAHLSLMDDEGETRDNLDMPPNAELAGQIKEQFDAGKDVLVVVVSAMGIDQILSFKNAAER.

The residue at position 52 (K52) is a Hypusine. The tract at residues D99–P125 is disordered.

The protein belongs to the eIF-5A family. Post-translationally, lys-52 undergoes hypusination, a unique post-translational modification that consists in the addition of a butylamino group from spermidine to lysine side chain, leading to the formation of the unusual amino acid hypusine. eIF-5As are the only known proteins to undergo this modification, which is essential for their function. Hypusination is mediated by the consecutive action of deoxyhypusine synthase DHSc and deoxyhypusine hydroxylase DOHH.

It localises to the cytoplasm. Its function is as follows. Translation factor that promotes translation elongation and termination, particularly upon ribosome stalling at specific amino acid sequence contexts. Binds between the exit (E) and peptidyl (P) site of the ribosome and promotes rescue of stalled ribosome: specifically required for efficient translation of polyproline-containing peptides as well as other motifs that stall the ribosome. Acts as a ribosome quality control (RQC) cofactor by joining the RQC complex to facilitate peptidyl transfer during CAT tailing step. Required for cell growth during both bloodstream (BF) and insect procyclic (PF) life cycle stages and for survival of the bloodstream form. The chain is Eukaryotic translation initiation factor 5A from Trypanosoma brucei brucei (strain 927/4 GUTat10.1).